A 407-amino-acid chain; its full sequence is uncharacterized protein (407 aa).

Residues 1–290 lie on the Lumenal side of the membrane; sequence MPLNIIGTAL…SNSLRRVISN (290 aa). NADP(+) contacts are provided by D114, K236, and S281. K236 (lowers pKa of active site Tyr) is an active-site residue. Residues 291 to 311 traverse the membrane as a helical segment; that stretch reads GSVVLLIILYCILLYPILWLF. At 312–407 the chain is on the cytoplasmic side; the sequence is TKSGRRGDQS…KSQNKSRKDD (96 aa). A coiled-coil region spans residues 361 to 390; the sequence is ELQKKLFDNTERDILQLEKKVAAKRNANKT. The tract at residues 383–407 is disordered; that stretch reads AKRNANKTGNQNSKKKSQNKSRKDD. A compositionally biased stretch (basic residues) spans 395–407; it reads SKKKSQNKSRKDD.

The protein belongs to the short-chain dehydrogenases/reductases (SDR) family.

It is found in the endoplasmic reticulum membrane. In terms of biological role, may be involved in lipid metabolism. This is an uncharacterized protein from Saccharomyces cerevisiae (strain ATCC 204508 / S288c) (Baker's yeast).